A 466-amino-acid chain; its full sequence is Vacuolar-processing enzyme delta-isozyme (466 aa).

Positions Met-1–Ser-24 are cleaved as a signal peptide. Asn-137 carries N-linked (GlcNAc...) asparagine glycosylation. Residue His-164 is part of the active site. The Nucleophile role is filled by Cys-206. Cys-239 and Cys-253 form a disulfide bridge. An N-linked (GlcNAc...) asparagine glycan is attached at Asn-322. 2 disulfide bridges follow: Cys-417–Cys-447 and Cys-429–Cys-464.

This sequence belongs to the peptidase C13 family. Post-translationally, auto-catalytic activation. As to expression, seed specific. Restricted to developing seeds at 7 days after anthesis, and, at lower levels, detected in flowers. Detected in siliques, specifically in seed coats (at protein level).

The protein resides in the secreted. Its subcellular location is the extracellular space. The protein localises to the cell wall. It localises to the vacuole. The catalysed reaction is Hydrolysis of proteins and small molecule substrates at -Asn-|-Xaa- bonds.. With respect to regulation, strongly inhibited by biotin-YVAD-fmk (a caspase-1 inhibitor) and by Ac-DEVD-fmk. Functionally, asparagine-specific endopeptidase that may be involved in processing of proteins targeted to vacuoles. Probably involved in post-translational proteolysis of seed storage proteins in the protein storage vacuole of developing seeds. Exhibits a caspase-1-like activity in extracellular granules. At the early stage of seed development, required for the formation of the seed coat, by regulating cell death of specific cell layers in inner integument. This Arabidopsis thaliana (Mouse-ear cress) protein is Vacuolar-processing enzyme delta-isozyme.